Consider the following 373-residue polypeptide: Spermidine/putrescine import ATP-binding protein PotA (373 aa).

The ABC transporter domain maps to 5-235 (IVFEHVSKKF…PKSSFVADFI (231 aa)). 37 to 44 (GPSGCGKT) contributes to the ATP binding site.

It belongs to the ABC transporter superfamily. Spermidine/putrescine importer (TC 3.A.1.11.1) family. In terms of assembly, the complex is composed of two ATP-binding proteins (PotA), two transmembrane proteins (PotB and PotC) and a solute-binding protein (PotD).

The protein localises to the cell inner membrane. The catalysed reaction is ATP + H2O + polyamine-[polyamine-binding protein]Side 1 = ADP + phosphate + polyamineSide 2 + [polyamine-binding protein]Side 1.. In terms of biological role, part of the ABC transporter complex PotABCD involved in spermidine/putrescine import. Responsible for energy coupling to the transport system. The polypeptide is Spermidine/putrescine import ATP-binding protein PotA (Protochlamydia amoebophila (strain UWE25)).